A 351-amino-acid polypeptide reads, in one-letter code: uncharacterized protein (351 aa).

Residues 25–67 form a disordered region; sequence KKAETETLPPANSQPAAPAPEAKPTEAPVAKAEAKPETPAQPV. The segment covering 33–55 has biased composition (low complexity); it reads PPANSQPAAPAPEAKPTEAPVAK.

This is an uncharacterized protein from Escherichia coli (strain K12).